Reading from the N-terminus, the 269-residue chain is MGKITAIKKLKRLYRVDLSDLDEEKIYLCEDTIIHFFITIDKEVSETDLEEILAYDQFAQGKSLALYYISFKMRTGAEVRKYLLEHDINDTDQIEQVLSVLTENNLINDKSYAENFIEGKISMGSSGPYQIKQKLLTKGISNDVLSETLNEIYSEEKQIDVAYKLASKLSRTYGTRLTLKQLKDKIIQNLMNKGFSYSVSSIALDSLELEADEENEMDLLYSELDKVAKRYTKNYEGYERKQKITQALARKGFLYDDISSALRDYTFPE.

Belongs to the RecX family.

It is found in the cytoplasm. Modulates RecA activity. This Lactococcus lactis subsp. cremoris (strain MG1363) protein is Regulatory protein RecX.